A 73-amino-acid polypeptide reads, in one-letter code: Waprin-Phi2 (73 aa).

The first 21 residues, 1–21 (MKATLLLLLLFAVILPGTISA), serve as a signal peptide directing secretion. One can recognise a WAP domain in the interval 22 to 72 (EQEKPGSCPNVDMPIPPLGLCKTTCSKDSDCSETKKCCKNGCGFMTCTTAR). 4 cysteine pairs are disulfide-bonded: cysteine 29–cysteine 59, cysteine 42–cysteine 63, cysteine 46–cysteine 58, and cysteine 52–cysteine 68.

The protein belongs to the venom waprin family. Expressed by the venom gland.

Its subcellular location is the secreted. Damages membranes of susceptible bacteria. Has no hemolytic activity. Not toxic to mice. Does not inhibit the proteinases elastase and cathepsin G. The sequence is that of Waprin-Phi2 from Philodryas olfersii (Green snake).